The sequence spans 81 residues: Putative chemokine-related protein B42 (81 aa).

Disulfide bonds link Cys7/Cys73, Cys8/Cys29, and Cys11/Cys45.

In terms of tissue distribution, expressed in placenta, heart, lung, liver, pancreas, skeletal muscle and brain.

Its subcellular location is the cytoplasm. The sequence is that of Putative chemokine-related protein B42 from Homo sapiens (Human).